We begin with the raw amino-acid sequence, 120 residues long: Aspartate 1-decarboxylase (120 aa).

Ser25 (schiff-base intermediate with substrate; via pyruvic acid) is an active-site residue. Ser25 is subject to Pyruvic acid (Ser). Residue Thr57 participates in substrate binding. The active-site Proton donor is the Tyr58. Residue 73–75 (GAA) participates in substrate binding.

This sequence belongs to the PanD family. Heterooctamer of four alpha and four beta subunits. Pyruvate is required as a cofactor. Post-translationally, is synthesized initially as an inactive proenzyme, which is activated by self-cleavage at a specific serine bond to produce a beta-subunit with a hydroxyl group at its C-terminus and an alpha-subunit with a pyruvoyl group at its N-terminus.

The protein resides in the cytoplasm. It catalyses the reaction L-aspartate + H(+) = beta-alanine + CO2. The protein operates within cofactor biosynthesis; (R)-pantothenate biosynthesis; beta-alanine from L-aspartate: step 1/1. Its function is as follows. Catalyzes the pyruvoyl-dependent decarboxylation of aspartate to produce beta-alanine. This is Aspartate 1-decarboxylase from Cupriavidus necator (strain ATCC 17699 / DSM 428 / KCTC 22496 / NCIMB 10442 / H16 / Stanier 337) (Ralstonia eutropha).